The primary structure comprises 334 residues: Large ribosomal subunit protein uL3 (334 aa).

Residues 1–10 are compositionally biased toward basic residues; the sequence is MGMKKSRPRR. Residues 1–20 are disordered; that stretch reads MGMKKSRPRRGSLAFSPRKR.

Belongs to the universal ribosomal protein uL3 family. As to quaternary structure, part of the 50S ribosomal subunit. Forms a cluster with proteins L14 and L24e.

Its function is as follows. One of the primary rRNA binding proteins, it binds directly near the 3'-end of the 23S rRNA, where it nucleates assembly of the 50S subunit. This Methanococcus maripaludis (strain C6 / ATCC BAA-1332) protein is Large ribosomal subunit protein uL3.